Here is a 447-residue protein sequence, read N- to C-terminus: FAD-dependent monooxygenase tropB (447 aa).

Residues 12-32 form a helical membrane-spanning segment; that stretch reads PLSVGIVGGGIIGVILAAGLV. Positions 42, 55, and 124 each coordinate FAD. Asparagine 153 carries N-linked (GlcNAc...) asparagine glycosylation. Catalysis depends on residues arginine 206 and tyrosine 239. Residue asparagine 243 is glycosylated (N-linked (GlcNAc...) asparagine). Residues aspartate 322 and alanine 335 each coordinate FAD.

Belongs to the paxM FAD-dependent monooxygenase family. It depends on FAD as a cofactor.

The protein localises to the membrane. It functions in the pathway secondary metabolite biosynthesis. Its function is as follows. FAD-dependent monooxygenase; part of the gene cluster that mediates the biosynthesis of the tropolone class of fungal maleic anhydrides. Within the pathway, tropB catalyzes a synthetically challenging asymmetric oxidative dearomatization reaction to convert 3-methylorcinaldehyde into a hydroxycyclohexadione. The pathway begins with the synthesis of 3-methylorcinaldehyde by the non-reducing polyketide synthase (PKS) tropA. 3-methylorcinaldehyde is the substrate for the FAD-dependent monooxygenase tropB to yield a dearomatized hydroxycyclohexadione. The 2-oxoglutarate-dependent dioxygenase tropC then performs the oxidative ring expansion to provide the first tropolone metabolite stipitaldehyde. Trop D converts stipitaldehyde into stipitacetal which is in turn converted to stipitalide by the short-chain dehydrogenase/reductase tropE. The next steps involve tropF, tropG, tropH, tropI and tropJ to form successive tropolone maleic anhydrides including stipitaldehydic, stipitatonic and stipitatic acids. This Talaromyces stipitatus (strain ATCC 10500 / CBS 375.48 / QM 6759 / NRRL 1006) (Penicillium stipitatum) protein is FAD-dependent monooxygenase tropB.